A 249-amino-acid chain; its full sequence is Syntaxin-10 (249 aa).

The residue at position 2 (Ser-2) is an N-acetylserine. The Cytoplasmic segment spans residues 2–228; that stretch reads SLEDPFFVVR…VSHMTSDRRQ (227 aa). A coiled-coil region spans residues 41-69; sequence EELDWTTNELRNGLRSIEWDLEDLEETIG. At Ser-108 the chain carries Phosphoserine. Thr-110 bears the Phosphothreonine mark. Phosphoserine occurs at positions 134, 140, and 143. One can recognise a t-SNARE coiled-coil homology domain in the interval 157–219; that stretch reads QLIMDEQDQQ…DGVLRKLAKV (63 aa). Residues 229-249 form a helical; Anchor for type IV membrane protein membrane-spanning segment; it reads WCAIAVLVGVLLLVLILLFSL.

This sequence belongs to the syntaxin family. In terms of assembly, interacts with VPS52. As to expression, expressed at high levels in heart, skeletal muscle and pancreas.

Its subcellular location is the golgi apparatus membrane. In terms of biological role, SNARE involved in vesicular transport from the late endosomes to the trans-Golgi network. The chain is Syntaxin-10 (STX10) from Homo sapiens (Human).